Reading from the N-terminus, the 137-residue chain is Large ribosomal subunit protein uL16 (137 aa).

This sequence belongs to the universal ribosomal protein uL16 family. In terms of assembly, part of the 50S ribosomal subunit.

In terms of biological role, binds 23S rRNA and is also seen to make contacts with the A and possibly P site tRNAs. In Chelativorans sp. (strain BNC1), this protein is Large ribosomal subunit protein uL16.